Consider the following 65-residue polypeptide: Large ribosomal subunit protein bL35 (65 aa).

Over residues 1-15 (MPKMKTKKSASKRFT) the composition is skewed to basic residues. The tract at residues 1-27 (MPKMKTKKSASKRFTARPNGSFKRGQA) is disordered.

Belongs to the bacterial ribosomal protein bL35 family.

The sequence is that of Large ribosomal subunit protein bL35 from Cupriavidus pinatubonensis (strain JMP 134 / LMG 1197) (Cupriavidus necator (strain JMP 134)).